A 156-amino-acid polypeptide reads, in one-letter code: 6,7-dimethyl-8-ribityllumazine synthase (156 aa).

5-amino-6-(D-ribitylamino)uracil-binding positions include F22, 57–59 (AYE), and 81–83 (TVI). Residue 86–87 (GT) coordinates (2S)-2-hydroxy-3-oxobutyl phosphate. The active-site Proton donor is the H89. F114 contributes to the 5-amino-6-(D-ribitylamino)uracil binding site. R128 contacts (2S)-2-hydroxy-3-oxobutyl phosphate.

This sequence belongs to the DMRL synthase family. As to quaternary structure, forms an icosahedral capsid composed of 60 subunits, arranged as a dodecamer of pentamers.

It carries out the reaction (2S)-2-hydroxy-3-oxobutyl phosphate + 5-amino-6-(D-ribitylamino)uracil = 6,7-dimethyl-8-(1-D-ribityl)lumazine + phosphate + 2 H2O + H(+). It functions in the pathway cofactor biosynthesis; riboflavin biosynthesis; riboflavin from 2-hydroxy-3-oxobutyl phosphate and 5-amino-6-(D-ribitylamino)uracil: step 1/2. In terms of biological role, catalyzes the formation of 6,7-dimethyl-8-ribityllumazine by condensation of 5-amino-6-(D-ribitylamino)uracil with 3,4-dihydroxy-2-butanone 4-phosphate. This is the penultimate step in the biosynthesis of riboflavin. This Salmonella agona (strain SL483) protein is 6,7-dimethyl-8-ribityllumazine synthase.